We begin with the raw amino-acid sequence, 352 residues long: Ferrochelatase (352 aa).

Residues histidine 222 and glutamate 303 each contribute to the Fe cation site.

Belongs to the ferrochelatase family.

The protein localises to the cytoplasm. The enzyme catalyses heme b + 2 H(+) = protoporphyrin IX + Fe(2+). It functions in the pathway porphyrin-containing compound metabolism; protoheme biosynthesis; protoheme from protoporphyrin-IX: step 1/1. Catalyzes the ferrous insertion into protoporphyrin IX. This chain is Ferrochelatase, found in Brucella abortus (strain S19).